The sequence spans 106 residues: Large ribosomal subunit protein eL42 (106 aa).

Belongs to the eukaryotic ribosomal protein eL42 family.

This is Large ribosomal subunit protein eL42 (RPL44) from Debaryomyces hansenii (strain ATCC 36239 / CBS 767 / BCRC 21394 / JCM 1990 / NBRC 0083 / IGC 2968) (Yeast).